The primary structure comprises 540 residues: MAERSQTAPEAGNDTGNEDAIGGNVNKYIVLPNGYSGQPKKGHLTFDACFESGNLGRVEQVSDFEYDLFIRPDTCNPRFRVWFNFTVENVKELQRVIFNIVNFSKTKSLYRDGMAPMVKSTSRPKWQRLPPKNVYYYRCPDHRKNYVMSFAFCFDREDDIYQFAYCYPYTYTRFQHYLDSLQKKNMDYFFREQLGQSVQQRQLDLLTITSPENLREGSEKKVIFITGRVHPGETPSSFVCQGIIDFLVSQHPIARVLREHLVFKIAPMLNPDGVYLGNYRCSLMGFDLNRHWLDPSPWAHPTLHGVKQLIIKMYNDPKTSLEFYIDIHAHSTMMNGFMYGNIFEDEERFQRQSIFPKLLCQNAEDFSYTSTSFNRDAVKAGTGRRFLGGLLDHSSYCYTLEVSFYSYIIGGTTAAVPYTEEAYMKLGRNVARTFLDYYRLNSLVEKIAVPMPRLRSKEERRLGWEHPSCLRAEQPLEVLGIPMCSGKALNEHLGNDIQWHLDCGSSTLPLGLISCSPSSSASWNDMAMSNSILLPDHSFH.

The Peptidase M14 domain occupies 167 to 438 (YPYTYTRFQH…NVARTFLDYY (272 aa)). 3 residues coordinate Zn(2+): His-230, Glu-233, and His-328. Glu-401 functions as the Proton donor/acceptor in the catalytic mechanism.

This sequence belongs to the peptidase M14 family. Interacts with MYLK. It depends on Zn(2+) as a cofactor. As to expression, widely expressed. Expressed abundantly in testis, pituitary and brain and to a lower extent in eye, stomach, adrenal and kidney. In brain, expressed at low level in cerebellum as compared to cortex.

It is found in the cytoplasm. It localises to the cytosol. The protein resides in the cytoskeleton. Its subcellular location is the microtubule organizing center. The protein localises to the centrosome. It is found in the centriole. It localises to the golgi apparatus. The protein resides in the cilium basal body. The catalysed reaction is (L-glutamyl)(n+1)-gamma-L-glutamyl-L-glutamyl-[protein] + H2O = (L-glutamyl)(n)-gamma-L-glutamyl-L-glutamyl-[protein] + L-glutamate. It carries out the reaction C-terminal L-alpha-aminoacyl-L-glutamyl-L-glutamyl-[tubulin] + H2O = C-terminal L-alpha-aminoacyl-L-glutamyl-[tubulin] + L-glutamate. Metallocarboxypeptidase that mediates protein deglutamylation of tubulin and non-tubulin target proteins. Catalyzes the removal of polyglutamate side chains present on the gamma-carboxyl group of glutamate residues within the C-terminal tail of tubulin protein. Specifically cleaves tubulin long-side-chains, while it is not able to remove the branching point glutamate. Also catalyzes the removal of polyglutamate residues from the carboxy-terminus of non-tubulin proteins such as MYLK. Mediates the deglutamylation of nucleotidyltransferase CGAS, leading to CGAS antiviral defense response activation. Involved in KLF4 deglutamylation which promotes KLF4 proteasome-mediated degradation, thereby negatively regulating cell pluripotency maintenance and embryogenesis. The chain is Cytosolic carboxypeptidase 6 from Mus musculus (Mouse).